Here is a 1242-residue protein sequence, read N- to C-terminus: Structural polyprotein (1242 aa).

Residues 14-101 (WRPRMPPRPW…PKRKPGRRER (88 aa)) form a disordered region. The segment covering 26–42 (RMPTMQRPDQQARQMQQ) has biased composition (low complexity). The interval 35-66 (QQARQMQQLIAAVSTLALRQNAAAPQRGKKKQ) is host transcription inhibition. Residues 59–96 (PQRGKKKQPRRKKPKPQPEKPKKQEQKPKQKKAPKRKP) carry the Nuclear localization signal motif. The span at 61-73 (RGKKKQPRRKKPK) shows a compositional bias: basic residues. The span at 74–86 (PQPEKPKKQEQKP) shows a compositional bias: basic and acidic residues. Residues 82-111 (QEQKPKQKKAPKRKPGRRERMCMKIEHDCI) are binding to the viral RNA. Over residues 87–98 (KQKKAPKRKPGR) the composition is skewed to basic residues. Positions 96–110 (PGRRERMCMKIEHDC) are ribosome-binding. C110 and C125 are joined by a disulfide. The 149-residue stretch at 110–258 (CIFEVKHEGK…KITPEGTVEW (149 aa)) folds into the Peptidase S3 domain. Catalysis depends on H136, which acts as the Charge relay system. A Nuclear export signal motif is present at residues 141–151 (IDNADLARLSY). An interaction with spike glycoprotein E2 region spans residues 152–157 (KKSSKY). D158 functions as the Charge relay system in the catalytic mechanism. Residues 180–190 (PEGHYNWHYGA) are dimerization of the capsid protein. S210 (charge relay system) is an active-site residue. Positions 216–220 (DNKGP) are dimerization of the capsid protein. The interval 259–272 (AASTVTAMCLLTNI) is functions as an uncleaved signal peptide for the precursor of protein E3/E2. 8 cysteine pairs are disulfide-bonded: C267–C276, C281–C285, C284–C316, C343–C449, C346–C352, C415–C429, C477–C589, and C527–C544. An N-linked (GlcNAc...) asparagine; by host glycan is attached at N271. The Extracellular segment spans residues 325-690 (STANHFNAYK…YYYGLHPTTT (366 aa)). 2 interaction with host Mxra8 receptor regions span residues 350 to 353 (HSCH) and 386 to 388 (HDH). Interaction with host Mxra8 receptor regions lie at residues 508 to 511 (QSGN) and 540 to 546 (TINSCTV). N-linked (GlcNAc...) asparagine; by host glycosylation occurs at N586. The chain crosses the membrane as a helical span at residues 691 to 711 (IVVVIRVSVVVLLSFAASVYM). The Cytoplasmic portion of the chain corresponds to 712-746 (CVVARTKCLTPYALTPGAVVPVTIGVLCCAPKAHA). The interaction with the capsid protein stretch occupies residues 714 to 718 (VARTK). Residues C719, C739, and C740 are each lipidated (S-palmitoyl cysteine; by host). Positions 719–739 (CLTPYALTPGAVVPVTIGVLC) are transient transmembrane before p62-6K protein processing. A disulfide bridge links C719 with C740. The Extracellular portion of the chain corresponds to 747–761 (ASFAEGMAYLWDNNQ). N-linked (GlcNAc...) asparagine; by host glycosylation occurs at N760. Residues 762 to 782 (SMFWMELTGPLALLILATCCA) traverse the membrane as a helical segment. Topologically, residues 783–785 (RSL) are cytoplasmic. A helical transmembrane segment spans residues 786-806 (LSCCKGSFLVAMSIGSAVASA). At 807 to 1217 (YEHTAIIPNQ…STAMTWAQHL (411 aa)) the chain is on the extracellular side. Disulfide bonds link C855-C920, C868-C900, C869-C902, and C874-C884. The interval 890-907 (VYPFMWGGAYCFCDSENT) is E1 fusion peptide loop. N947 and N1076 each carry an N-linked (GlcNAc...) asparagine; by host glycan. Intrachain disulfides connect C1065/C1077, C1107/C1180, C1112/C1184, and C1134/C1174. A helical membrane pass occupies residues 1218–1238 (AGGVGLLIALAVLILVIVTCV). Residue C1237 is the site of S-palmitoyl cysteine; by host attachment. The Cytoplasmic portion of the chain corresponds to 1239-1242 (TLRR).

Homodimer. Homomultimer. Interacts with host karyopherin KPNA4; this interaction allows the nuclear import of the viral capsid protein. Interacts with spike glycoprotein E2. Interacts with host IRAK1; the interaction leads to inhibition of IRAK1-dependent signaling. In terms of assembly, the precursor of protein E3/E2 and E1 form a heterodimer shortly after synthesis. As to quaternary structure, the precursor of protein E3/E2 and E1 form a heterodimer shortly after synthesis. Processing of the precursor of protein E3/E2 into E2 and E3 results in a heterodimer of the spike glycoproteins E2 and E1. Spike at virion surface are constituted of a trimer of E2-E1 heterodimers. After target cell attachment and endocytosis, E1 change conformation to form homotrimers. Interacts with 6K protein. Interacts with spike glycoprotein E1. Processing of the precursor of protein E3/E2 into E2 and E3 results in a heterodimer of the spike glycoproteins E2 and E1. Spike at virion surface are constituted of a trimer of E2-E1 heterodimers. Interacts with 6K protein. Interacts with host MXRA8; this interaction mediates virus entry. In terms of assembly, oligomer. Interacts with spike glycoprotein E1. Interacts with spike glycoprotein E2. In terms of processing, structural polyprotein: Specific enzymatic cleavages in vivo yield mature proteins. Capsid protein is auto-cleaved during polyprotein translation, unmasking a signal peptide at the N-terminus of the precursor of E3/E2. The remaining polyprotein is then targeted to the host endoplasmic reticulum, where host signal peptidase cleaves it into pE2, 6K and E1 proteins. pE2 is further processed to mature E3 and E2 by host furin in trans-Golgi vesicle. Palmitoylated via thioester bonds. These palmitoylations may induce disruption of the C-terminus transmembrane. This would result in the reorientation of E2 C-terminus from lumenal to cytoplasmic side. Post-translationally, N-glycosylated. In terms of processing, palmitoylated via thioester bonds.

The protein resides in the virion. The protein localises to the host cytoplasm. Its subcellular location is the host cell membrane. It localises to the host nucleus. It is found in the virion membrane. The protein resides in the host Golgi apparatus. The protein localises to the host trans-Golgi network. Its subcellular location is the host endoplasmic reticulum. It catalyses the reaction Autocatalytic release of the core protein from the N-terminus of the togavirus structural polyprotein by hydrolysis of a -Trp-|-Ser- bond.. Functionally, forms an icosahedral capsid with a T=4 symmetry composed of 240 copies of the capsid protein surrounded by a lipid membrane through which penetrate 80 spikes composed of trimers of E1-E2 heterodimers. The capsid protein binds to the viral RNA genome at a site adjacent to a ribosome binding site for viral genome translation following genome release. Possesses a protease activity that results in its autocatalytic cleavage from the nascent structural protein. Following its self-cleavage, the capsid protein transiently associates with ribosomes, and within several minutes the protein binds to viral RNA and rapidly assembles into icosahedric core particles. The resulting nucleocapsid eventually associates with the cytoplasmic domain of the spike glycoprotein E2 at the cell membrane, leading to budding and formation of mature virions. In case of infection, new virions attach to target cells and after clathrin-mediated endocytosis their membrane fuses with the host endosomal membrane. This leads to the release of the nucleocapsid into the cytoplasm, followed by an uncoating event necessary for the genomic RNA to become accessible. The uncoating might be triggered by the interaction of capsid proteins with ribosomes. Binding of ribosomes would release the genomic RNA since the same region is genomic RNA-binding and ribosome-binding. Specifically inhibits interleukin-1 receptor-associated kinase 1/IRAK1-dependent signaling during viral entry, representing a means by which the alphaviruses may evade innate immune detection and activation prior to viral gene expression. Provides the signal sequence for the translocation of the precursor of protein E3/E2 to the host endoplasmic reticulum. Furin-cleaved E3 remains associated with spike glycoprotein E1 and mediates pH protection of the latter during the transport via the secretory pathway. After virion release from the host cell, the assembly protein E3 is gradually released in the extracellular space. Its function is as follows. Plays a role in viral attachment to target host cell, by binding to the cell receptor MXRA8. Synthesized as a p62 precursor which is processed by furin at the cell membrane just before virion budding, giving rise to E2-E1 heterodimer. The p62-E1 heterodimer is stable, whereas E2-E1 is unstable and dissociate at low pH. p62 is processed at the last step, presumably to avoid E1 fusion activation before its final export to cell surface. E2 C-terminus contains a transitory transmembrane that would be disrupted by palmitoylation, resulting in reorientation of the C-terminal tail from lumenal to cytoplasmic side. This step is critical since E2 C-terminus is involved in budding by interacting with capsid proteins. This release of E2 C-terminus in cytoplasm occurs lately in protein export, and precludes premature assembly of particles at the endoplasmic reticulum membrane. In terms of biological role, acts as a viroporin that participates in virus glycoprotein processing and transport to the plasma membrane, cell permeabilization and budding of viral particles. Disrupts the calcium homeostasis of the cell, probably at the endoplasmic reticulum level. This leads to cytoplasmic calcium elevation. Because of its lipophilic properties, the 6K protein is postulated to influence the selection of lipids that interact with the transmembrane domains of the glycoproteins, which, in turn, affects the deformability of the bilayer required for the extreme curvature that occurs as budding proceeds. Present in low amount in virions, about 3% compared to viral glycoproteins. Functionally, class II viral fusion protein. Fusion activity is inactive as long as E1 is bound to E2 in mature virion. After virus attachment to target cell via host MXRA8 and endocytosis, acidification of the endosome induce dissociation of E1/E2 heterodimer and concomitant trimerization of the E1 subunits. This E1 trimer is fusion active, and promotes release of viral nucleocapsid in cytoplasm after endosome and viral membrane fusion. Efficient fusion requires the presence of cholesterol and sphingolipid in the target membrane. The chain is Structural polyprotein from Mayaro virus (strain Brazil) (MAYV).